The following is a 233-amino-acid chain: LOB domain-containing protein 40 (233 aa).

Positions 3 to 109 (MSCNGCRVLR…VEAVMRGSPV (107 aa)) constitute an LOB domain. The segment covering 143-160 (KRRSRGACKEERNVRSLS) has biased composition (basic and acidic residues). The segment at 143-183 (KRRSRGACKEERNVRSLSHESSLSHESPVSSEETTTEEPKT) is disordered. The span at 161–175 (HESSLSHESPVSSEE) shows a compositional bias: low complexity.

It belongs to the LOB domain-containing protein family. In terms of tissue distribution, expressed in roots and flowers.

The polypeptide is LOB domain-containing protein 40 (LBD40) (Arabidopsis thaliana (Mouse-ear cress)).